Here is a 604-residue protein sequence, read N- to C-terminus: Zinc finger protein chinmo (604 aa).

The BTB domain maps to 32–98; sequence ADVILSCDGV…MYKGEVHVSQ (67 aa). 4 disordered regions span residues 122–155, 291–310, 330–437, and 450–470; these read RLAA…SGGS, CDSL…GYTH, RSPY…DEST, and NLKY…TPNT. The segment covering 364 to 374 has biased composition (low complexity); sequence PSSSASSTAPT. Residues 384 to 409 are compositionally biased toward polar residues; it reads ASPQSSRYENHSPSTTAGNGNATSSL. Over residues 425–437 the composition is skewed to acidic residues; it reads ANDDDRELMDEST. Over residues 461 to 470 the composition is skewed to low complexity; sequence SNTSSTTPNT. 2 C2H2-type zinc fingers span residues 517–540 and 545–568; these read LKCL…RQRH and VPCP…AREH.

Broadly expressed in the developing larval central nervous system (at protein level). Expressed in the larval lymph gland and circulating hemocytes (at protein level). Expressed in all cell types of the adult testis stem cell niche but not detected in somatic cells of the adult ovary (at protein level). In the testis, expressed at high levels in cyst stem cells and early cyst cells and, at lower levels, in germline stem cells (at protein level).

It is found in the nucleus. Its function is as follows. Required for morphological differentiation of postmitotic neurons during postembryonic brain development. Ensures production of appropriate neuron subtypes within a lineage by preventing precocious generation of late neuronal types of that lineage. Acts as a downstream mediator of the transcriptional activator Stat92e and is required for the development of the eye-antennal disk which gives rise to the adult eye, antenna and head capsule, for transcriptional repression of the Notch receptor ligand Ser and for the self-renewal of cyst stem cells in the testis. In the adult testis, maintains the male identify of adult somatic cyst stem cells. Represses expression and alternative splicing of transformer pre-mRNA, resulting in the production of the male-specific isoform of transcription factor dsx which ensures male-specific transcription of target genes. Plays a role in actin nuclear localization through its involvement in repressing the expression of the kinase Cdi. This maintains the cofilin/actin-depolymerizing factor homolog tsr in its unphosphorylated state which is required for actin nuclear import. This chain is Zinc finger protein chinmo, found in Drosophila melanogaster (Fruit fly).